The sequence spans 456 residues: Exodeoxyribonuclease 7 large subunit (456 aa).

The protein belongs to the XseA family. As to quaternary structure, heterooligomer composed of large and small subunits.

It is found in the cytoplasm. The enzyme catalyses Exonucleolytic cleavage in either 5'- to 3'- or 3'- to 5'-direction to yield nucleoside 5'-phosphates.. In terms of biological role, bidirectionally degrades single-stranded DNA into large acid-insoluble oligonucleotides, which are then degraded further into small acid-soluble oligonucleotides. The chain is Exodeoxyribonuclease 7 large subunit from Shigella flexneri serotype 5b (strain 8401).